The primary structure comprises 609 residues: MCGIVGAVAQRDVAEILVEGLRRLEYRGYDSAGVAVIHNGELNRTRRVGKVQELSAALETDPLAGGTGIAHTRWATHGEPSERNAHPHLSEGDIAVVHNGIIENHHKLREMLKEHGYHFSSDTDTEVICHLVHHQLKTNDSLLAAVQATVKQLEGAYGTVVIDRRDSERMVVARSGSPLVIGFGLGENFVASDQLALLPVTRSFAFLEEGDVAEVTRRTVSIFDVHGNKVEREVKESEITHDAGDKGEYRHYMLKEIYEQPLALTRTIEGRIANKQVLDTAFGDNAAEFLKDIKHVQIIACGTSYHAGMAARYWLEDWAGVSCNVEIASEFRYRKSHLFPNSLLVTISQSGETADTLAAMRLAKEMGYKATLTICNAPGSSLVRESDMAYMMKAGAEIGVASTKAFTVQLAGLLMLTAVIGRHNGMSEQMQAEITQSLQSMPAKVEQALGLDDAIAELAEDFADKHHALFLGRGDQYPIAMEGALKLKEISYIHAEAYASGELKHGPLALIDADMPVIVVAPNNELLEKLKSNVEEVRARGGLMYVFADVDAEFESDDTMKVIPVPHCDIFMAPLIYTIPLQLLSYHVALIKGTDVDQPRNLAKSVTVE.

Residue C2 is the Nucleophile; for GATase activity of the active site. Positions 2-218 constitute a Glutamine amidotransferase type-2 domain; that stretch reads CGIVGAVAQR…EGDVAEVTRR (217 aa). 2 SIS domains span residues 286 to 426 and 458 to 599; these read AAEF…HNGM and LAED…VDQP. K604 (for Fru-6P isomerization activity) is an active-site residue.

Homodimer.

It localises to the cytoplasm. The enzyme catalyses D-fructose 6-phosphate + L-glutamine = D-glucosamine 6-phosphate + L-glutamate. Functionally, catalyzes the first step in hexosamine metabolism, converting fructose-6P into glucosamine-6P using glutamine as a nitrogen source. The sequence is that of Glutamine--fructose-6-phosphate aminotransferase [isomerizing] from Shewanella oneidensis (strain ATCC 700550 / JCM 31522 / CIP 106686 / LMG 19005 / NCIMB 14063 / MR-1).